Consider the following 316-residue polypeptide: Retron Ec73 putative ribosyltransferase/DNA-binding protein (316 aa).

Possible ribosyltransferase/DNA-binding component of antiviral defense system retron Ec73, composed of a non-coding RNA (ncRNA) followed by this protein then a reverse transcriptase (RT). Expression of this retron confers protection against bacteriophages SECphi4, SECphi6, SECphi27 and P1. At multiplicity of infection (MOI) of 0.02 cultures grow normally when infected with SECphi4 without collapsing, at MOI 2 cultures enter growth stasis. The protein is Retron Ec73 putative ribosyltransferase/DNA-binding protein of Escherichia coli.